Reading from the N-terminus, the 303-residue chain is Mitochondrial carrier homolog 2 (303 aa).

The residue at position 2 (Ala2) is an N-acetylalanine. Topologically, residues 2 to 15 (ADAASQVLLGSGLT) are mitochondrial intermembrane. 2 Solcar repeats span residues 2 to 98 (ADAA…YQES) and 118 to 206 (DHVI…VNTY). A helical membrane pass occupies residues 16 to 36 (ILSQPLMYVKVLIQVGYEPLP). The Cytoplasmic portion of the chain corresponds to 37–77 (PTIGRNIFGRQVCQLPGLFSYAQHIASIDGRRGLFTGLTPR). The chain crosses the membrane as a helical span at residues 78 to 92 (LCSGVLGTVVHGKVL). Residues 93–135 (QHYQESDKGEELGPGNVQKEVSSSFDHVIKETTREMIARSAAT) are Mitochondrial intermembrane-facing. The chain crosses the membrane as a helical span at residues 136–156 (LITHPFHVITLRSMVQFIGRE). At 157–180 (SKYCGLCDSIITIYREEGILGFFA) the chain is on the cytoplasmic side. Residues 181 to 199 (GLVPRLLGDILSLWLCNSL) form a helical membrane-spanning segment. Residues 200–231 (AYLVNTYALDSGVSTMNEMKSYSQAVTGFFAS) are Mitochondrial intermembrane-facing. Residues 232–252 (MLTYPFVLVSNLMAVNNCGLA) traverse the membrane as a helical segment. The Cytoplasmic portion of the chain corresponds to 253 to 280 (GGCPPYSPIYTSWIDCWCMLQKEGNMSR). Residues 281–303 (GNSLFFRKVPFGKTYCCDLKMLI) traverse the membrane as a helical segment.

This sequence belongs to the mitochondrial carrier (TC 2.A.29) family. As to quaternary structure, interacts with p15BID.

It localises to the mitochondrion outer membrane. Its function is as follows. Protein insertase that mediates insertion of transmembrane proteins into the mitochondrial outer membrane. Catalyzes insertion of proteins with alpha-helical transmembrane regions, such as signal-anchored, tail-anchored and multi-pass membrane proteins. Does not mediate insertion of beta-barrel transmembrane proteins. Also acts as a receptor for the truncated form of pro-apoptotic BH3-interacting domain death agonist (p15 BID) and has therefore a critical function in apoptosis. Regulates the quiescence/cycling of hematopoietic stem cells (HSCs). Acts as a regulator of mitochondrial fusion, essential for the naive-to-primed interconversion of embryonic stem cells (ESCs). Acts as a regulator of lipid homeostasis and has a regulatory role in adipocyte differentiation and biology. The chain is Mitochondrial carrier homolog 2 from Homo sapiens (Human).